Here is a 641-residue protein sequence, read N- to C-terminus: XK-related protein 6 (641 aa).

2 disordered regions span residues 20–47 (LDEA…DGSE) and 84–120 (RSAA…PPPP). The segment covering 34 to 46 (PGGGGCGGGGDGS) has biased composition (gly residues). Pro residues predominate over residues 107 to 120 (PPTPSAARPEPPPP). A run of 7 helical transmembrane segments spans residues 130–150 (LWIV…LWLA), 159–179 (YVYF…VQSL), 318–338 (TLPC…LASY), 372–392 (VISF…FVVV), 413–433 (WEEI…WFNV), 442–462 (MFAY…LWYF), and 473–493 (AVPA…MMLL).

This sequence belongs to the XK family.

The protein localises to the cell membrane. The polypeptide is XK-related protein 6 (Homo sapiens (Human)).